The following is a 68-amino-acid chain: Large ribosomal subunit protein bL28 (68 aa).

Residues 1-30 are disordered; sequence MAKICDHCGKKPQSGNNVSHANNKSKRRFE. Residues 13 to 22 show a composition bias toward polar residues; the sequence is QSGNNVSHAN.

It belongs to the bacterial ribosomal protein bL28 family.

In Solidesulfovibrio magneticus (strain ATCC 700980 / DSM 13731 / RS-1) (Desulfovibrio magneticus), this protein is Large ribosomal subunit protein bL28.